The following is a 193-amino-acid chain: Putative RING finger protein ORF38 (193 aa).

Residues 12 to 50 form an RING-type zinc finger; sequence CCICLDDEDVDRDNTIPCRHTVCRTCYVKPMLDQCPVCR.

This is Putative RING finger protein ORF38 from Magallana gigas (Pacific oyster).